Here is a 352-residue protein sequence, read N- to C-terminus: S-adenosylmethionine:tRNA ribosyltransferase-isomerase (352 aa).

It belongs to the QueA family. As to quaternary structure, monomer.

It is found in the cytoplasm. The catalysed reaction is 7-aminomethyl-7-carbaguanosine(34) in tRNA + S-adenosyl-L-methionine = epoxyqueuosine(34) in tRNA + adenine + L-methionine + 2 H(+). It functions in the pathway tRNA modification; tRNA-queuosine biosynthesis. Functionally, transfers and isomerizes the ribose moiety from AdoMet to the 7-aminomethyl group of 7-deazaguanine (preQ1-tRNA) to give epoxyqueuosine (oQ-tRNA). This is S-adenosylmethionine:tRNA ribosyltransferase-isomerase from Paraburkholderia xenovorans (strain LB400).